A 182-amino-acid polypeptide reads, in one-letter code: Probable inosine/xanthosine triphosphatase (182 aa).

Positions 42 and 69 each coordinate Mg(2+).

This sequence belongs to the YjjX NTPase family. Homodimer. Mg(2+) is required as a cofactor. The cofactor is Mn(2+).

The catalysed reaction is XTP + H2O = XDP + phosphate + H(+). The enzyme catalyses ITP + H2O = IDP + phosphate + H(+). In terms of biological role, phosphatase that hydrolyzes non-canonical purine nucleotides such as XTP and ITP to their respective diphosphate derivatives. Probably excludes non-canonical purines from DNA/RNA precursor pool, thus preventing their incorporation into DNA/RNA and avoiding chromosomal lesions. This is Probable inosine/xanthosine triphosphatase from Methanothermobacter thermautotrophicus (strain ATCC 29096 / DSM 1053 / JCM 10044 / NBRC 100330 / Delta H) (Methanobacterium thermoautotrophicum).